We begin with the raw amino-acid sequence, 66 residues long: MAKGKDVRVTIFLECTSCVRNDIKKEFAGISRYITQKNRHNTPSRLELRKFCPYCYKHTIHGEIKK.

The protein belongs to the bacterial ribosomal protein bL33 family.

The protein localises to the plastid. It localises to the chloroplast. The polypeptide is Large ribosomal subunit protein bL33c (Aethionema cordifolium (Lebanon stonecress)).